The following is a 432-amino-acid chain: Carbohydrate esterase MZ0003 (432 aa).

The first 25 residues, 1-25 (MQRTCVLIVLIVTSTMWTPDPDVYA), serve as a signal peptide directing secretion. A GXSYXG catalytic site motif motif is present at residues 266–271 (GHSRLG). The active-site Nucleophile is the Ser268. Positions 272 and 359 each coordinate substrate. His409 functions as the Charge relay system in the catalytic mechanism.

Belongs to the carbohydrate esterase 15 (CE15) family. Does not require metal ions for activity. serves as cofactor.

The protein localises to the periplasm. Is inhibited by PMSF and by NaF in vitro, which is consistent with the catalytic nucleophile being a serine. Its function is as follows. Displays some glucuronoyl esterase activity in vitro, since it is able to hydrolyze methyl 4-O-methyl-D-glucopyranosyluronate, allyl D-glucuronate, benzyl D-glucuronate and D-glucuronic acid methyl ester. However, esters of glucuronic acid are probably not its biological substrate, as they are not present in the marine environment. Can also hydrolyze a range of other esters, including p-nitrophenyl acetate. More likely biologically-relevant substrates for MZ0003 and other marine bacterial CE15s are algal cell wall polysaccharides, as these would be readily available in this environment and could be used as energy sources. This is Carbohydrate esterase MZ0003 from Unknown prokaryotic organism.